The chain runs to 1692 residues: Flagellar attachment zone protein 1 (1692 aa).

Coiled coils occupy residues 613–657, 684–864, and 903–1607; these read REQE…KLQK, VTLD…HKVR, and NDHM…SALE. 37 consecutive repeat copies span residues 1012-1025, 1026-1039, 1040-1053, 1054-1067, 1068-1081, 1082-1095, 1096-1109, 1110-1123, 1124-1137, 1138-1151, 1152-1165, 1166-1179, 1180-1193, 1194-1207, 1208-1221, 1222-1235, 1236-1249, 1250-1263, 1264-1277, 1278-1291, 1292-1305, 1306-1319, 1320-1333, 1334-1347, 1348-1361, 1362-1375, 1376-1389, 1390-1403, 1404-1417, 1418-1431, 1432-1445, 1446-1459, 1460-1473, 1474-1487, 1488-1501, 1502-1515, and 1516-1529. The segment at 1012–1529 is 37 X 14 AA tandem repeats of E-E-L-E-L-K-[VA]-A-E-N-E-K-L-A; the sequence is EELELKAAEN…LKVAENKRLA (518 aa).

Its subcellular location is the cell projection. It localises to the cilium. It is found in the flagellum. In terms of biological role, a component of FAZ filament that is required for correct FAZ assembly and attachment. Not essential for new flagellum growth. This Trypanosoma brucei brucei (strain 927/4 GUTat10.1) protein is Flagellar attachment zone protein 1.